We begin with the raw amino-acid sequence, 115 residues long: UPF0738 protein SAV1005 (115 aa).

This sequence belongs to the UPF0738 family.

The chain is UPF0738 protein SAV1005 from Staphylococcus aureus (strain Mu50 / ATCC 700699).